Here is a 225-residue protein sequence, read N- to C-terminus: NAD(P)H-quinone oxidoreductase subunit K, chloroplastic (225 aa).

Residues C43, C44, C108, and C139 each contribute to the [4Fe-4S] cluster site.

It belongs to the complex I 20 kDa subunit family. NDH is composed of at least 16 different subunits, 5 of which are encoded in the nucleus. Requires [4Fe-4S] cluster as cofactor.

Its subcellular location is the plastid. The protein localises to the chloroplast thylakoid membrane. It carries out the reaction a plastoquinone + NADH + (n+1) H(+)(in) = a plastoquinol + NAD(+) + n H(+)(out). The enzyme catalyses a plastoquinone + NADPH + (n+1) H(+)(in) = a plastoquinol + NADP(+) + n H(+)(out). In terms of biological role, NDH shuttles electrons from NAD(P)H:plastoquinone, via FMN and iron-sulfur (Fe-S) centers, to quinones in the photosynthetic chain and possibly in a chloroplast respiratory chain. The immediate electron acceptor for the enzyme in this species is believed to be plastoquinone. Couples the redox reaction to proton translocation, and thus conserves the redox energy in a proton gradient. The protein is NAD(P)H-quinone oxidoreductase subunit K, chloroplastic of Arabidopsis thaliana (Mouse-ear cress).